The primary structure comprises 228 residues: Urease accessory protein UreH (228 aa).

5 helical membrane-spanning segments follow: residues 48–68, 79–99, 130–150, 162–182, and 196–216; these read VFWG…IILM, SLEF…ILSL, LFIG…LTMS, ILFF…LIGI, and AFIQ…MYNL.

This sequence belongs to the NiCoT transporter (TC 2.A.52) family.

It localises to the cell membrane. Functionally, probably facilitates nickel incorporation. May constitute a multicomponent high-affinity nickel transporter. Not essential for the expression of catalytically active urease. The sequence is that of Urease accessory protein UreH (ureH) from Bacillus sp. (strain TB-90).